The sequence spans 363 residues: MSKNYHIAVLPGDGIGPEVMTQALKVLNAVRNRFAMRITTSHYDVGGAAIDNHGQPLPPATVEGCEQADAVLFGSVGGPKWEHLPPDQQPERGALLPLRKRFKLFSNLRPAKLYQGLEAFCPLRADIAANGFDILCVRELTGGIYFGQPKGREGSGQYEKAFDTEVYHRFEIERIARIAFESARKRRHKVTSIDKANVLQSSILWREIVNEIATEYPDVELAHMYIDNATMQLIKDPSQFDVLLCSNLFGDILSDECAMITGSMGMLPSASLNEQGFGLYEPAGGSAPDIAGKNIANPIAQILSLALLLRYSLDADDAACAIERAINRALEEGIRTGDLARGAAAVSTDEMGDIIARYVAEGV.

Residue 78 to 91 (GPKWEHLPPDQQPE) participates in NAD(+) binding. 4 residues coordinate substrate: R99, R109, R138, and D227. Positions 227, 251, and 255 each coordinate Mg(2+). 285 to 297 (GSAPDIAGKNIAN) serves as a coordination point for NAD(+).

The protein belongs to the isocitrate and isopropylmalate dehydrogenases family. LeuB type 1 subfamily. As to quaternary structure, homodimer. The cofactor is Mg(2+). Requires Mn(2+) as cofactor.

The protein resides in the cytoplasm. It catalyses the reaction (2R,3S)-3-isopropylmalate + NAD(+) = 4-methyl-2-oxopentanoate + CO2 + NADH. It participates in amino-acid biosynthesis; L-leucine biosynthesis; L-leucine from 3-methyl-2-oxobutanoate: step 3/4. Its function is as follows. Catalyzes the oxidation of 3-carboxy-2-hydroxy-4-methylpentanoate (3-isopropylmalate) to 3-carboxy-4-methyl-2-oxopentanoate. The product decarboxylates to 4-methyl-2 oxopentanoate. This is 3-isopropylmalate dehydrogenase from Shigella sonnei (strain Ss046).